Consider the following 268-residue polypeptide: Small ribosomal subunit protein uS3 (268 aa).

Residues 39–107 (VREYLKKKLK…PVHVNIEEIR (69 aa)) form the KH type-2 domain. Residues 216–268 (VEEVAEEKRPRRNARPGGDRRPRRDGEGGGPAGARRGAPRRAGGAGGDGKTGE) form a disordered region. The span at 232 to 242 (GGDRRPRRDGE) shows a compositional bias: basic and acidic residues. A compositionally biased stretch (low complexity) spans 248–257 (GARRGAPRRA). Residues 258 to 268 (GGAGGDGKTGE) are compositionally biased toward gly residues.

Belongs to the universal ribosomal protein uS3 family. In terms of assembly, part of the 30S ribosomal subunit. Forms a tight complex with proteins S10 and S14.

Its function is as follows. Binds the lower part of the 30S subunit head. Binds mRNA in the 70S ribosome, positioning it for translation. The polypeptide is Small ribosomal subunit protein uS3 (Paraburkholderia phytofirmans (strain DSM 17436 / LMG 22146 / PsJN) (Burkholderia phytofirmans)).